The sequence spans 252 residues: Triosephosphate isomerase (252 aa).

10–12 (NWK) lines the substrate pocket. The Electrophile role is filled by histidine 96. Residue glutamate 168 is the Proton acceptor of the active site. Substrate is bound by residues glycine 174, serine 214, and 235–236 (GG).

This sequence belongs to the triosephosphate isomerase family. Homodimer.

It is found in the cytoplasm. It catalyses the reaction D-glyceraldehyde 3-phosphate = dihydroxyacetone phosphate. Its pathway is carbohydrate biosynthesis; gluconeogenesis. It participates in carbohydrate degradation; glycolysis; D-glyceraldehyde 3-phosphate from glycerone phosphate: step 1/1. In terms of biological role, involved in the gluconeogenesis. Catalyzes stereospecifically the conversion of dihydroxyacetone phosphate (DHAP) to D-glyceraldehyde-3-phosphate (G3P). The protein is Triosephosphate isomerase of Streptococcus pyogenes serotype M5 (strain Manfredo).